Here is a 186-residue protein sequence, read N- to C-terminus: TATA box-binding protein-like 1 (186 aa).

Belongs to the TBP family.

It is found in the cytoplasm. Its subcellular location is the nucleus. Functionally, part of a specialized transcription system that mediates the transcription of most ribosomal proteins through the 5'-TCT-3' motif which is a core promoter element at these genes. Seems to also mediate the transcription of NF1. Does not bind the TATA box. Members of the TBP family are differentially required to regulate transcription and development during early embryogenesis. Particularly regulates genes that have a role in catabolism. The protein is TATA box-binding protein-like 1 (tbpl1) of Xenopus tropicalis (Western clawed frog).